We begin with the raw amino-acid sequence, 243 residues long: ATP synthase subunit a (243 aa).

Transmembrane regions (helical) follow at residues 29-49 (NASLFMVLSTLIISLFCYIGL), 54-74 (ILPNSMQLIIEAIYNFIVSTI), 89-109 (VFTIFTFIATCNLLGVLPLGF), 114-134 (HIAVTFAISMVVFISVTAIGF), 144-164 (ILLPKGTPGWLAPMMVFIELF), 182-202 (IAGHTIIKVIAGFVIKMNIFL), and 208-228 (AFIIILIGFEIFVAILQAYIF).

It belongs to the ATPase A chain family. In terms of assembly, F-type ATPases have 2 components, CF(1) - the catalytic core - and CF(0) - the membrane proton channel. CF(1) has five subunits: alpha(3), beta(3), gamma(1), delta(1), epsilon(1). CF(0) has three main subunits: a(1), b(2) and c(9-12). The alpha and beta chains form an alternating ring which encloses part of the gamma chain. CF(1) is attached to CF(0) by a central stalk formed by the gamma and epsilon chains, while a peripheral stalk is formed by the delta and b chains.

It is found in the cell inner membrane. In terms of biological role, key component of the proton channel; it plays a direct role in the translocation of protons across the membrane. In Ehrlichia chaffeensis (strain ATCC CRL-10679 / Arkansas), this protein is ATP synthase subunit a.